The following is a 486-amino-acid chain: MNAPESVQAKPRKRYDAGVMKYKEMGYWDGDYEPKDTDLLALFRITPQDGVDPVEAAAAVAGESSTATWTVVWTDRLTACDMYRAKAYRVDPVPNNPEQFFCYVAYDLSLFEEGSIANLTASIIGNVFSFKPIKAARLEDMRFPVAYVKTFAGPSTGIIVERERLDKFGRPLLGATTKPKLGLSGRNYGRVVYEGLKGGLDFMKDDENINSQPFMHWRDRFLFVMDAVNKASAATGEVKGSYLNVTAGTMEEMYRRAEFAKSLGSVVIMIDLIVGWTCIQSMSNWCRQNDMILHLHRAGHGTYTRQKNHGVSFRVIAKWLRLAGVDHMHTGTAVGKLEGDPLTVQGYYNVCRDAYTHTDLTRGLFFDQDWASLRKVMPVASGGIHAGQMHQLIHLFGDDVVLQFGGGTIGHPQGIQAGATANRVALEAMVLARNEGRDILNEGPEILRDAARWCGPLRAALDTWGDISFNYTPTDTSDFAPTASVA.

Substrate contacts are provided by N126 and T176. Residue K178 is the Proton acceptor of the active site. K180 is a substrate binding site. Positions 204, 206, and 207 each coordinate Mg(2+). An N6-carboxylysine modification is found at K204. H296 functions as the Proton acceptor in the catalytic mechanism. Substrate contacts are provided by R297, H329, and S381.

This sequence belongs to the RuBisCO large chain family. Type I subfamily. In terms of assembly, heterohexadecamer of 8 large chains and 8 small chains. The cofactor is Mg(2+).

It catalyses the reaction 2 (2R)-3-phosphoglycerate + 2 H(+) = D-ribulose 1,5-bisphosphate + CO2 + H2O. The catalysed reaction is D-ribulose 1,5-bisphosphate + O2 = 2-phosphoglycolate + (2R)-3-phosphoglycerate + 2 H(+). In terms of biological role, ruBisCO catalyzes two reactions: the carboxylation of D-ribulose 1,5-bisphosphate, the primary event in carbon dioxide fixation, as well as the oxidative fragmentation of the pentose substrate. Both reactions occur simultaneously and in competition at the same active site. The polypeptide is Ribulose bisphosphate carboxylase large chain, plasmid (cbbL2) (Cupriavidus necator (strain ATCC 17699 / DSM 428 / KCTC 22496 / NCIMB 10442 / H16 / Stanier 337) (Ralstonia eutropha)).